The sequence spans 417 residues: Serine hydroxymethyltransferase (417 aa).

Residues Leu121 and Gly125–Leu127 each bind (6S)-5,6,7,8-tetrahydrofolate. Lys230 carries the post-translational modification N6-(pyridoxal phosphate)lysine. (6S)-5,6,7,8-tetrahydrofolate is bound at residue Ser355–Phe357.

Belongs to the SHMT family. As to quaternary structure, homodimer. Pyridoxal 5'-phosphate is required as a cofactor.

Its subcellular location is the cytoplasm. It catalyses the reaction (6R)-5,10-methylene-5,6,7,8-tetrahydrofolate + glycine + H2O = (6S)-5,6,7,8-tetrahydrofolate + L-serine. It participates in one-carbon metabolism; tetrahydrofolate interconversion. Its pathway is amino-acid biosynthesis; glycine biosynthesis; glycine from L-serine: step 1/1. Functionally, catalyzes the reversible interconversion of serine and glycine with tetrahydrofolate (THF) serving as the one-carbon carrier. This reaction serves as the major source of one-carbon groups required for the biosynthesis of purines, thymidylate, methionine, and other important biomolecules. Also exhibits THF-independent aldolase activity toward beta-hydroxyamino acids, producing glycine and aldehydes, via a retro-aldol mechanism. In Ruthia magnifica subsp. Calyptogena magnifica, this protein is Serine hydroxymethyltransferase.